We begin with the raw amino-acid sequence, 1037 residues long: Caspase recruitment domain-containing protein 6 (1037 aa).

At A2 the chain carries N-acetylalanine. The region spanning 3–94 (TESTPSEIIE…QSAAICGLRH (92 aa)) is the CARD domain. S154 is modified (phosphoserine). Disordered regions lie at residues 235 to 270 (DPEH…TSLS), 669 to 704 (VSSG…PIQE), and 887 to 1037 (RTSH…GGKH). Residues 242–261 (DGEEDFENSETTEFSGEEPS) show a composition bias toward acidic residues. A compositionally biased stretch (low complexity) spans 690-699 (LKSSSKSQAL). Composition is skewed to polar residues over residues 911–928 (ASQQ…SNPA), 938–954 (KSSQ…TVKH), and 963–984 (VPSQ…QTKP). S985 carries the phosphoserine modification. Positions 994-1012 (PSQPWPPQSKPSQPRPPQP) are enriched in pro residues. Positions 1023–1037 (KAHHSKAGQKRGGKH) are enriched in basic residues.

May be involved in apoptosis. The chain is Caspase recruitment domain-containing protein 6 (CARD6) from Homo sapiens (Human).